Reading from the N-terminus, the 105-residue chain is Small ribosomal subunit protein uS10c (105 aa).

This sequence belongs to the universal ribosomal protein uS10 family. Part of the 30S ribosomal subunit.

The protein resides in the plastid. It localises to the chloroplast. In terms of biological role, involved in the binding of tRNA to the ribosomes. The polypeptide is Small ribosomal subunit protein uS10c (Pyropia yezoensis (Susabi-nori)).